Consider the following 147-residue polypeptide: Large ribosomal subunit protein bL9 (147 aa).

This sequence belongs to the bacterial ribosomal protein bL9 family.

In terms of biological role, binds to the 23S rRNA. The protein is Large ribosomal subunit protein bL9 of Nitratiruptor sp. (strain SB155-2).